Here is a 376-residue protein sequence, read N- to C-terminus: Lipoyl synthase, mitochondrial (376 aa).

Residues C103, C108, C114, C134, C138, C141, and S349 each coordinate [4Fe-4S] cluster. Residues 119 to 338 form the Radical SAM core domain; that stretch reads EHGTQTATIM…EDRGNQLGFL (220 aa).

It belongs to the radical SAM superfamily. Lipoyl synthase family. Requires [4Fe-4S] cluster as cofactor.

It is found in the mitochondrion. The enzyme catalyses [[Fe-S] cluster scaffold protein carrying a second [4Fe-4S](2+) cluster] + N(6)-octanoyl-L-lysyl-[protein] + 2 oxidized [2Fe-2S]-[ferredoxin] + 2 S-adenosyl-L-methionine + 4 H(+) = [[Fe-S] cluster scaffold protein] + N(6)-[(R)-dihydrolipoyl]-L-lysyl-[protein] + 4 Fe(3+) + 2 hydrogen sulfide + 2 5'-deoxyadenosine + 2 L-methionine + 2 reduced [2Fe-2S]-[ferredoxin]. Its pathway is protein modification; protein lipoylation via endogenous pathway; protein N(6)-(lipoyl)lysine from octanoyl-[acyl-carrier-protein]: step 2/2. Its function is as follows. Catalyzes the radical-mediated insertion of two sulfur atoms into the C-6 and C-8 positions of the octanoyl moiety bound to the lipoyl domains of lipoate-dependent enzymes, thereby converting the octanoylated domains into lipoylated derivatives. The chain is Lipoyl synthase, mitochondrial from Drosophila ananassae (Fruit fly).